The following is a 944-amino-acid chain: LPS-assembly protein LptD (944 aa).

The signal sequence occupies residues 1–33 (MALKSPAFRRKFPLLVTGGLLALQPLATSFVVA). The segment at 52–102 (KATGNLPPRPVHPGAAAASSGAEAPGEVGEAQAEKPMLVTESKGRGLKSRS) is disordered. Residues 64–82 (PGAAAASSGAEAPGEVGEA) show a composition bias toward low complexity.

It belongs to the LptD family. Component of the lipopolysaccharide transport and assembly complex. Interacts with LptE and LptA.

It is found in the cell outer membrane. In terms of biological role, together with LptE, is involved in the assembly of lipopolysaccharide (LPS) at the surface of the outer membrane. This is LPS-assembly protein LptD from Pseudomonas entomophila (strain L48).